Here is a 145-residue protein sequence, read N- to C-terminus: MGKGKPRGLNSARKLRVHRRNNRWADQAYKARLLGTAFKSSPFGGSSHAKGIVLEKIGIESKQPNSAIRKCVRVQLIKNGKKVTAFVPNDGCLNFVDENDEVLLAGFGRRGKAKGDIPGVRFKVVKVSGVSLLALWKEKKEKPRS.

The protein belongs to the universal ribosomal protein uS12 family. In terms of assembly, component of the small ribosomal subunit. Mature ribosomes consist of a small (40S) and a large (60S) subunit. The 40S subunit contains about 32 different proteins and 1 molecule of RNA (18S). The 60S subunit contains 45 different proteins and 3 molecules of RNA (25S, 5.8S and 5S).

Its subcellular location is the cytoplasm. Functionally, component of the ribosome, a large ribonucleoprotein complex responsible for the synthesis of proteins in the cell. The small ribosomal subunit (SSU) binds messenger RNAs (mRNAs) and translates the encoded message by selecting cognate aminoacyl-transfer RNA (tRNA) molecules. The large subunit (LSU) contains the ribosomal catalytic site termed the peptidyl transferase center (PTC), which catalyzes the formation of peptide bonds, thereby polymerizing the amino acids delivered by tRNAs into a polypeptide chain. The nascent polypeptides leave the ribosome through a tunnel in the LSU and interact with protein factors that function in enzymatic processing, targeting, and the membrane insertion of nascent chains at the exit of the ribosomal tunnel. This chain is Small ribosomal subunit protein uS12 (RPS23A), found in Candida albicans (strain SC5314 / ATCC MYA-2876) (Yeast).